The following is a 124-amino-acid chain: Peptidyl-tRNA hydrolase (124 aa).

This sequence belongs to the PTH2 family.

The protein localises to the cytoplasm. The catalysed reaction is an N-acyl-L-alpha-aminoacyl-tRNA + H2O = an N-acyl-L-amino acid + a tRNA + H(+). Functionally, the natural substrate for this enzyme may be peptidyl-tRNAs which drop off the ribosome during protein synthesis. This is Peptidyl-tRNA hydrolase from Aeropyrum pernix (strain ATCC 700893 / DSM 11879 / JCM 9820 / NBRC 100138 / K1).